Here is a 669-residue protein sequence, read N- to C-terminus: DNA mismatch repair protein MutL (669 aa).

The segment at 361–409 is disordered; sequence ENVFSQPYQAPVTSSTQKKSTGAYQGSAGKGLTDTQKSPQKTLDTRQFG. 2 stretches are compositionally biased toward polar residues: residues 363–384 and 393–402; these read VFSQ…TGAY and TDTQKSPQKT.

The protein belongs to the DNA mismatch repair MutL/HexB family.

Functionally, this protein is involved in the repair of mismatches in DNA. It is required for dam-dependent methyl-directed DNA mismatch repair. May act as a 'molecular matchmaker', a protein that promotes the formation of a stable complex between two or more DNA-binding proteins in an ATP-dependent manner without itself being part of a final effector complex. In Proteus mirabilis (strain HI4320), this protein is DNA mismatch repair protein MutL.